A 454-amino-acid chain; its full sequence is SH2 domain-containing protein 4A (454 aa).

4 disordered regions span residues alanine 45 to serine 65, glutamate 107 to tyrosine 131, lysine 152 to serine 177, and arginine 237 to glutamine 302. Residues glutamate 107 to glutamate 120 show a composition bias toward basic and acidic residues. Phosphoserine is present on residues serine 118 and serine 124. Residues lysine 240–arginine 259 are compositionally biased toward basic and acidic residues. 2 positions are modified to phosphoserine: serine 261 and serine 315. Residues tryptophan 347–cysteine 440 enclose the SH2 domain.

As to quaternary structure, interacts with ESR1. In terms of tissue distribution, ubiquitously expressed. Aberrantly expressed in some cancers.

It localises to the cytoplasm. Its function is as follows. Inhibits estrogen-induced cell proliferation by competing with PLCG for binding to ESR1, blocking the effect of estrogen on PLCG and repressing estrogen-induced proliferation. May play a role in T-cell development and function. This Homo sapiens (Human) protein is SH2 domain-containing protein 4A (SH2D4A).